The primary structure comprises 359 residues: tRNA-specific 2-thiouridylase MnmA (359 aa).

ATP is bound by residues 9-16 and M35; that span reads GISGGVDS. The interval 95–97 is interaction with target base in tRNA; that stretch reads NPD. The active-site Nucleophile is C100. C100 and C197 are disulfide-bonded. Position 124 (G124) interacts with ATP. The interaction with tRNA stretch occupies residues 147–149; that stretch reads KDQ. The Cysteine persulfide intermediate role is filled by C197. The interaction with tRNA stretch occupies residues 309–310; it reads RY.

It belongs to the MnmA/TRMU family.

It is found in the cytoplasm. It carries out the reaction S-sulfanyl-L-cysteinyl-[protein] + uridine(34) in tRNA + AH2 + ATP = 2-thiouridine(34) in tRNA + L-cysteinyl-[protein] + A + AMP + diphosphate + H(+). Functionally, catalyzes the 2-thiolation of uridine at the wobble position (U34) of tRNA, leading to the formation of s(2)U34. The polypeptide is tRNA-specific 2-thiouridylase MnmA (Francisella tularensis subsp. holarctica (strain FTNF002-00 / FTA)).